A 298-amino-acid polypeptide reads, in one-letter code: Elongation factor Ts (298 aa).

Positions 79–82 (TDFV) are involved in Mg(2+) ion dislocation from EF-Tu.

This sequence belongs to the EF-Ts family.

The protein localises to the cytoplasm. In terms of biological role, associates with the EF-Tu.GDP complex and induces the exchange of GDP to GTP. It remains bound to the aminoacyl-tRNA.EF-Tu.GTP complex up to the GTP hydrolysis stage on the ribosome. The sequence is that of Elongation factor Ts from Cereibacter sphaeroides (strain ATCC 17029 / ATH 2.4.9) (Rhodobacter sphaeroides).